A 62-amino-acid polypeptide reads, in one-letter code: Small ribosomal subunit protein bS21 (62 aa).

Basic and acidic residues predominate over residues lysine 40–alanine 52. The segment at lysine 40 to tyrosine 62 is disordered. Basic residues predominate over residues arginine 53 to tyrosine 62.

The protein belongs to the bacterial ribosomal protein bS21 family.

In Limosilactobacillus fermentum (strain NBRC 3956 / LMG 18251) (Lactobacillus fermentum), this protein is Small ribosomal subunit protein bS21.